We begin with the raw amino-acid sequence, 583 residues long: Asparagine synthetase, root [glutamine-hydrolyzing] (583 aa).

Cys-2 functions as the For GATase activity in the catalytic mechanism. The 184-residue stretch at Cys-2 to Ser-185 folds into the Glutamine amidotransferase type-2 domain. L-glutamine contacts are provided by residues Arg-50 to Val-54, Asn-75 to Glu-77, and Asp-98. ATP is bound by residues Leu-231, Val-267, and Ser-341–Gly-342. Positions Asp-237–Pro-516 constitute an Asparagine synthetase domain.

As to expression, roots.

It carries out the reaction L-aspartate + L-glutamine + ATP + H2O = L-asparagine + L-glutamate + AMP + diphosphate + H(+). It participates in amino-acid biosynthesis; L-asparagine biosynthesis; L-asparagine from L-aspartate (L-Gln route): step 1/1. This is Asparagine synthetase, root [glutamine-hydrolyzing] (AS2) from Pisum sativum (Garden pea).